The chain runs to 117 residues: Peptidyl-tRNA hydrolase (117 aa).

Belongs to the PTH2 family.

Its subcellular location is the cytoplasm. The catalysed reaction is an N-acyl-L-alpha-aminoacyl-tRNA + H2O = an N-acyl-L-amino acid + a tRNA + H(+). In terms of biological role, the natural substrate for this enzyme may be peptidyl-tRNAs which drop off the ribosome during protein synthesis. The polypeptide is Peptidyl-tRNA hydrolase (Metallosphaera sedula (strain ATCC 51363 / DSM 5348 / JCM 9185 / NBRC 15509 / TH2)).